The primary structure comprises 635 residues: 1-deoxy-D-xylulose-5-phosphate synthase (635 aa).

Thiamine diphosphate-binding positions include H79 and 120–122 (GHS). D151 contacts Mg(2+). Thiamine diphosphate contacts are provided by residues 152 to 153 (GA), N182, Y290, and E372. N182 serves as a coordination point for Mg(2+).

It belongs to the transketolase family. DXPS subfamily. As to quaternary structure, homodimer. It depends on Mg(2+) as a cofactor. Thiamine diphosphate is required as a cofactor.

It carries out the reaction D-glyceraldehyde 3-phosphate + pyruvate + H(+) = 1-deoxy-D-xylulose 5-phosphate + CO2. The protein operates within metabolic intermediate biosynthesis; 1-deoxy-D-xylulose 5-phosphate biosynthesis; 1-deoxy-D-xylulose 5-phosphate from D-glyceraldehyde 3-phosphate and pyruvate: step 1/1. In terms of biological role, catalyzes the acyloin condensation reaction between C atoms 2 and 3 of pyruvate and glyceraldehyde 3-phosphate to yield 1-deoxy-D-xylulose-5-phosphate (DXP). The sequence is that of 1-deoxy-D-xylulose-5-phosphate synthase from Stenotrophomonas maltophilia (strain K279a).